The chain runs to 150 residues: Large ribosomal subunit protein eL19 (150 aa).

The segment at 55 to 89 (IKGQSRYRAKIRHEQKKKGRHRGPGSRKGKKTARM) is disordered.

The protein belongs to the eukaryotic ribosomal protein eL19 family. Part of the 50S ribosomal subunit.

Functionally, binds to the 23S rRNA. The sequence is that of Large ribosomal subunit protein eL19 from Pyrococcus furiosus (strain ATCC 43587 / DSM 3638 / JCM 8422 / Vc1).